Consider the following 179-residue polypeptide: Replication restart protein DnaT (179 aa).

Positions 154–179 are disordered; sequence SNGGLPKRDVNTVSEPDSQIPPGFRG.

This sequence belongs to the DnaT family. Homooligomerizes. Interacts with PriB. Component of the replication restart primosome. Primosome assembly occurs via a 'hand-off' mechanism. PriA binds to replication forks, subsequently PriB then DnaT bind; DnaT then displaces ssDNA to generate the helicase loading substrate.

In terms of biological role, involved in the restart of stalled replication forks, which reloads the replicative helicase on sites other than the origin of replication. Can function in multiple replication restart pathways. Displaces ssDNA from a PriB-ssDNA complex. Probably forms a spiral filament on ssDNA. The chain is Replication restart protein DnaT from Escherichia coli O127:H6 (strain E2348/69 / EPEC).